The sequence spans 63 residues: Translational regulator CsrA (63 aa).

The protein belongs to the CsrA/RsmA family. As to quaternary structure, homodimer; the beta-strands of each monomer intercalate to form a hydrophobic core, while the alpha-helices form wings that extend away from the core.

The protein localises to the cytoplasm. A key translational regulator that binds mRNA to regulate translation initiation and/or mRNA stability. Mediates global changes in gene expression, shifting from rapid growth to stress survival by linking envelope stress, the stringent response and the catabolite repression systems. Usually binds in the 5'-UTR; binding at or near the Shine-Dalgarno sequence prevents ribosome-binding, repressing translation, binding elsewhere in the 5'-UTR can activate translation and/or stabilize the mRNA. Its function is antagonized by small RNA(s). The protein is Translational regulator CsrA of Haemophilus influenzae (strain 86-028NP).